The primary structure comprises 358 residues: Probable branched-chain-amino-acid aminotransferase (358 aa).

At lysine 196 the chain carries N6-(pyridoxal phosphate)lysine.

The protein belongs to the class-IV pyridoxal-phosphate-dependent aminotransferase family. It depends on pyridoxal 5'-phosphate as a cofactor.

The catalysed reaction is L-leucine + 2-oxoglutarate = 4-methyl-2-oxopentanoate + L-glutamate. It catalyses the reaction L-isoleucine + 2-oxoglutarate = (S)-3-methyl-2-oxopentanoate + L-glutamate. The enzyme catalyses L-valine + 2-oxoglutarate = 3-methyl-2-oxobutanoate + L-glutamate. The protein operates within amino-acid biosynthesis; L-isoleucine biosynthesis; L-isoleucine from 2-oxobutanoate: step 4/4. It functions in the pathway amino-acid biosynthesis; L-leucine biosynthesis; L-leucine from 3-methyl-2-oxobutanoate: step 4/4. Its pathway is amino-acid biosynthesis; L-valine biosynthesis; L-valine from pyruvate: step 4/4. Functionally, acts on leucine, isoleucine and valine. This is Probable branched-chain-amino-acid aminotransferase (ilvE) from Staphylococcus aureus (strain N315).